A 471-amino-acid polypeptide reads, in one-letter code: P2X purinoceptor 2 (471 aa).

Residues 1–42 (MAAAQPKYPAGATARRLARGCWSALWDYETPKVIVVRNRRLG) lie on the Cytoplasmic side of the membrane. 6 cysteine pairs are disulfide-bonded: cysteine 21/cysteine 439, cysteine 125/cysteine 176, cysteine 136/cysteine 159, cysteine 142/cysteine 170, cysteine 226/cysteine 236, and cysteine 270/cysteine 279. The helical transmembrane segment at 43–63 (VLYRAVQLLILLYFVWYVFIV) threads the bilayer. Residues 64 to 337 (QKSYQESETG…IVHGQAGKFS (274 aa)) lie on the Extracellular side of the membrane. ATP-binding residues include lysine 81 and lysine 83. N-linked (GlcNAc...) asparagine glycosylation occurs at asparagine 133. Asparagine 194 carries an N-linked (GlcNAc...) asparagine glycan. Threonine 196 is an ATP binding site. Residues serine 296, asparagine 300, and arginine 302 each coordinate ATP. An N-linked (GlcNAc...) asparagine glycan is attached at asparagine 310. Position 319 (lysine 319) interacts with ATP. Positions 320 to 333 (AYGIRIDVIVHGQA) are pore-forming motif. A helical transmembrane segment spans residues 338–358 (LIPTIINLATALTSVGVGSFL). Topologically, residues 359–471 (CDWILLTFMN…PTDPKGLAQL (113 aa)) are cytoplasmic. Residues 400-471 (GQAPPEPGHR…PTDPKGLAQL (72 aa)) are disordered.

Belongs to the P2X receptor family. In terms of assembly, homotrimer and heterotrimer; functional P2XRs are organized as homomeric and heteromeric trimers. Homotrimer. Forms heterotrimer with P2RX1. Forms heterotrimer with P2RX6. Forms heterotrimer with P2RX3. Expressed in both the central and peripheral nervous system, as well as in the pituitary gland.

It localises to the cell membrane. The catalysed reaction is Ca(2+)(in) = Ca(2+)(out). The enzyme catalyses K(+)(in) = K(+)(out). It catalyses the reaction Na(+)(in) = Na(+)(out). Fast activation by external ATP. Exhibits slow desensitization during prolonged ATP activation. Not sensitive to the ATP agonist:alpha/beta-methylene-ATP. Its function is as follows. ATP-gated nonselective transmembrane cation channel permeable to potassium, sodium and calcium. Activation by extracellular ATP induces a variety of cellular responses, such as excitatory postsynaptic responses in sensory neurons, neuromuscular junctions (NMJ) formation, hearing, perception of taste and peristalsis. In the inner ear, regulates sound transduction and auditory neurotransmission, outer hair cell electromotility, inner ear gap junctions, and K(+) recycling. Mediates synaptic transmission between neurons and from neurons to smooth muscle. The chain is P2X purinoceptor 2 from Homo sapiens (Human).